The primary structure comprises 366 residues: Transmembrane protein 25 (366 aa).

The N-terminal stretch at 1–26 is a signal peptide; the sequence is MALPPGPAALRHTLLLLPALLSSGWG. Residues 27-232 lie on the Extracellular side of the membrane; it reads ELEPQIDGQT…APGLLATRVE (206 aa). The Ig-like domain maps to 30 to 123; it reads PQIDGQTWAE…SGRSANASVI (94 aa). Residues cysteine 52 and cysteine 107 are joined by a disulfide bond. Residues asparagine 106, asparagine 162, asparagine 175, asparagine 192, and asparagine 205 are each glycosylated (N-linked (GlcNAc...) asparagine). A helical membrane pass occupies residues 233 to 253; that stretch reads VPLLGIVVAAGLALGTLVGFS. Topologically, residues 254–366 are cytoplasmic; it reads TLVACLVCRK…SSVSSDEIWL (113 aa). Positions 299–308 are enriched in polar residues; it reads PSNLQLNDLT. The disordered stretch occupies residues 299-335; the sequence is PSNLQLNDLTPDSRAVKPADRQMAQNNSRPELLDPEP.

Interacts with GRIN2B. Expressed throughout the brain with higher levels in the pyramidal cell layer of the hippocampal CA1 and CA3 regions. Also highly expressed within the hippocampal dentate gyrus region and cerebellum and in scattered neurons in the cerebral cortex.

Its subcellular location is the cell membrane. The protein resides in the secreted. The protein localises to the late endosome. It localises to the lysosome. Functionally, in neurons, modulates the degradation of NMDA receptor GRIN2B subunit. Plays a role in the regulation of neuronal excitability. This chain is Transmembrane protein 25 (TMEM25), found in Homo sapiens (Human).